Reading from the N-terminus, the 282-residue chain is Large ribosomal subunit protein uL2 (282 aa).

2 disordered regions span residues 26–55 and 218–266; these read KKSP…RHRG and PHVR…HNKS. The segment covering 34–43 has biased composition (polar residues); that stretch reads LESQSHTAGR. A compositionally biased stretch (basic residues) spans 254–266; sequence TIGKKTRNKHNKS.

The protein belongs to the universal ribosomal protein uL2 family. In terms of assembly, part of the 50S ribosomal subunit. Forms a bridge to the 30S subunit in the 70S ribosome.

In terms of biological role, one of the primary rRNA binding proteins. Required for association of the 30S and 50S subunits to form the 70S ribosome, for tRNA binding and peptide bond formation. It has been suggested to have peptidyltransferase activity; this is somewhat controversial. Makes several contacts with the 16S rRNA in the 70S ribosome. The chain is Large ribosomal subunit protein uL2 from Pediococcus pentosaceus (strain ATCC 25745 / CCUG 21536 / LMG 10740 / 183-1w).